The sequence spans 148 residues: Ubiquitin-conjugating enzyme E2 30 (148 aa).

The region spanning Met-1 to Met-147 is the UBC core domain. The Glycyl thioester intermediate role is filled by Cys-85.

It belongs to the ubiquitin-conjugating enzyme family. As to quaternary structure, interacts with RGLG3 and RGLG4. Ubiquitously expressed at very low levels.

The catalysed reaction is S-ubiquitinyl-[E1 ubiquitin-activating enzyme]-L-cysteine + [E2 ubiquitin-conjugating enzyme]-L-cysteine = [E1 ubiquitin-activating enzyme]-L-cysteine + S-ubiquitinyl-[E2 ubiquitin-conjugating enzyme]-L-cysteine.. The protein operates within protein modification; protein ubiquitination. In terms of biological role, accepts the ubiquitin from the E1 complex and catalyzes its covalent attachment to other proteins. This is Ubiquitin-conjugating enzyme E2 30 (UBC30) from Arabidopsis thaliana (Mouse-ear cress).